Here is a 102-residue protein sequence, read N- to C-terminus: Urease subunit beta (102 aa).

Belongs to the urease beta subunit family. As to quaternary structure, heterotrimer of UreA (gamma), UreB (beta) and UreC (alpha) subunits. Three heterotrimers associate to form the active enzyme.

The protein resides in the cytoplasm. The catalysed reaction is urea + 2 H2O + H(+) = hydrogencarbonate + 2 NH4(+). Its pathway is nitrogen metabolism; urea degradation; CO(2) and NH(3) from urea (urease route): step 1/1. The protein is Urease subunit beta of Pseudomonas syringae pv. tomato (strain ATCC BAA-871 / DC3000).